The primary structure comprises 274 residues: Glutamate racemase (274 aa).

Residues 9-10 (DS) and 41-42 (YG) contribute to the substrate site. Cysteine 73 serves as the catalytic Proton donor/acceptor. Position 74–75 (74–75 (NT)) interacts with substrate. Residue cysteine 183 is the Proton donor/acceptor of the active site. Residue 184–185 (TH) participates in substrate binding.

The protein belongs to the aspartate/glutamate racemases family.

It catalyses the reaction L-glutamate = D-glutamate. Its pathway is cell wall biogenesis; peptidoglycan biosynthesis. Provides the (R)-glutamate required for cell wall biosynthesis. The sequence is that of Glutamate racemase from Shewanella baltica (strain OS195).